The sequence spans 183 residues: ATP-dependent protease subunit HslV (183 aa).

Threonine 10 is a catalytic residue. Alanine 164, cysteine 167, and threonine 170 together coordinate Na(+).

Belongs to the peptidase T1B family. HslV subfamily. A double ring-shaped homohexamer of HslV is capped on each side by a ring-shaped HslU homohexamer. The assembly of the HslU/HslV complex is dependent on binding of ATP.

It localises to the cytoplasm. The catalysed reaction is ATP-dependent cleavage of peptide bonds with broad specificity.. Its activity is regulated as follows. Allosterically activated by HslU binding. Its function is as follows. Protease subunit of a proteasome-like degradation complex believed to be a general protein degrading machinery. This is ATP-dependent protease subunit HslV from Rhizorhabdus wittichii (strain DSM 6014 / CCUG 31198 / JCM 15750 / NBRC 105917 / EY 4224 / RW1) (Sphingomonas wittichii).